Reading from the N-terminus, the 1146-residue chain is Ankyrin repeat and fibronectin type-III domain-containing protein 1 (1146 aa).

ANK repeat units follow at residues 133 to 162 (QGNEAMFEAVEQQDMDAVQILLYQYTPEEL) and 170 to 199 (EGLTPLDIAIMTNNVPIARILLRTGARESP). A Fibronectin type-III domain is found at 270–366 (MPTNVCLMVT…TTTPACASPS (97 aa)). A highly conserved peptide sequence region spans residues 607-614 (GLYLGYLK). Disordered stretches follow at residues 855 to 887 (NSTSSSHIDCLPSPPPSPEMHRRKTVSDSQPCS), 945 to 964 (VKTPLGPGQDPQGEGPNPDH), and 1106 to 1146 (PWAS…SSML). Over residues 1131-1146 (EGPTASPMSEILSSML) the composition is skewed to polar residues.

Functionally, may play a role in neuronal function. This Homo sapiens (Human) protein is Ankyrin repeat and fibronectin type-III domain-containing protein 1.